A 1738-amino-acid chain; its full sequence is MGQTATTPLSLTLDHWKDVERTAHNQSVEVRKRRWVTFCSAEWPTFNVGWPRDGTFNPDIITQVKIKVFSPGPHGHPDQVPYIVTWEALAVDPPPWVKPFVHPKPPLLLPPSAPSLPPEPPLSTPPQSSLYPALTSPLNTKPRPQVLPDSGGPLIDLLTEDPPPYRDPGPPSPDGKGDSGEVAPTEGAPDSSPMVSRLRGRREPPVADSTTSQAFPLRLGGNGQFQYWPFSSSDLYNWKNNNPSFSEDPGKLTALIESVLLTHQPTWDDCQQLLGTLLTGEEKQRVLLEARKAVRGEDGRPTQLPNDINDAFPLERPDWDYNTQRGRNHLVHYRQLLLAGLQNAGRSPTNLAKVKGITQGPNESPSAFLERLKEAYRRYTPYDPEDPGQETNVSMSFIWQSAPDIGRKLERLEDLKNKTLGDLVREAEKIFNKRETPEEREERVRRETEEKEERRRAEDERREKERDRRRHREMSKLLATVVSGQRQDRQGGERRRPQLDHDQCAYCKEKGHWARDCPKKPRGPRGPRPQASLLTLDDQGGQGQEPPPEPRITLKVGGQPVTFLVDTGAQHSVLTQNPGPLSDKSAWVQGATGGKRYRWTTDRRVHLATGKVTHSFLHVPDCPYPLLGRDLLTKLKAQIHFEGSGAQVVGPMGQPLQVLTLNIEDEYRLHETSKGPDVPLGSTWLSDFPQAWAETGGMGLAVRQAPLIIPLRAASTPVSIKQYPMSREARLGIKPHIQRLLDQGILVPCQSPWNTPLLPVKKPGTNDYRPVQDLREVNKRVEDIHPTVPNPYNLLSGLPPSHQWYTVLDLKDAFFCLRLHPTSQSLFAFEWRDPEMGISGQLTWTRLPQGFKNSPTLFDEALHRDLADFRIQHPDLILLQYVDDLLLAATSELDCQQGTRALLQTLGDLGYRASAKKAQICQKQVKYLGYLLKEGQRWLTEARKETVMGQPTPKTPRQLREFLGTAGFCRLWIPGFAEMAAPLYPLTKTGTLFKWGPDQQKAYQEIKQALLTAPALGLPDLTKPFELFVDEKQGYAKGVLTQKLGPWRRPVAYLSKKLDPVAAGWPPCLRMVAAIAVLTKDAGKLTMGQPLVILAPHAVEALVKQPPDRWLSNARMTHYQALLLDTDRVQFGPIVTLNPATLLPLPEEGLQHDCLDILAEAHGTRPDLTDQPLPDADHTWYTDGSSFLQEGQRKAGAAVTTETEVIWAKALPAGTSAQRAELIALTQALKMAEGKKLNVYTDSRYAFATAHIHGEIYRRRGLLTSEGKEIKNKEEILALLKALFLPKRLSIIHCPGHQKGNRAEARGNRMADQAAREVATRETPETSTLLIENSAPYTREHFHYTVTDIKDLTKLGATYDNAQKCWVYQGKPVMPDQFTFELLDFLHQLTHLSFSKTKALLERSYSPYYMLNRDRTLKDITETCKACAQVNASKSAVKQGTRVRGHRPGTHWEIDFTEVKPGLYGYKYLLVFVDTFSGWVEAFPTKKETAKVVTKKLLEEIFPRFGMPQVLGTDNGPAFVSKVSQTVADLLGVDWKLHCAYRPQSSGQVERMNRTIKETLTKLTLATGSRDWVLLLPLALYRARNTPGPHGLTPYEILYGAPPPLVNFPDPDMAKVTHNPSLQAHLQALYLVQHEVWRPLAAAYQEQLDRPVVPHPFRVGDTVWVRRHQTKNLEPRWKGPYTVLLTTPTALKVDGIAAWIHAAHVKAADTKIEPPSESTWRVQRSQNPLKIRLTRGTS.

The N-myristoyl glycine; by host moiety is linked to residue Gly2. The short motif at 111–114 (PSAP) is the PTAP/PSAP motif element. Over residues 111–124 (PSAPSLPPEPPLST) the composition is skewed to pro residues. The disordered stretch occupies residues 111-218 (PSAPSLPPEP…STTSQAFPLR (108 aa)). The short motif at 130-134 (LYPAL) is the LYPX(n)L motif element. Residues 161-173 (DPPPYRDPGPPSP) are compositionally biased toward pro residues. A PPXY motif motif is present at residues 162 to 165 (PPPY). A Phosphoserine; by host modification is found at Ser192. An interaction with host PIAS4 region spans residues 345-393 (GRSPTNLAKVKGITQGPNESPSAFLERLKEAYRRYTPYDPEDPGQETNV). The tract at residues 430–435 (IFNKRE) is interaction with host UBE2I. 2 stretches are compositionally biased toward basic and acidic residues: residues 434–466 (RETP…EKER) and 486–499 (RQDR…RPQL). Disordered regions lie at residues 434-499 (RETP…RPQL) and 513-552 (WARD…EPRI). A coiled-coil region spans residues 438–478 (EEREERVRRETEEKEERRRAEDERREKERDRRRHREMSKLL). The CCHC-type zinc-finger motif lies at 502 to 519 (DQCAYCKEKGHWARDCPK). In terms of domain architecture, Peptidase A2 spans 561 to 631 (VTFLVDTGAQ…CPYPLLGRDL (71 aa)). Asp566 acts as the Protease; shared with dimeric partner in catalysis. In terms of domain architecture, Reverse transcriptase spans 741–932 (LDQGILVPCQ…KQVKYLGYLL (192 aa)). The Mg(2+) site is built by Asp809, Asp883, Asp884, Asp1183, Glu1221, Asp1242, and Asp1312. An RNase H type-1 domain is found at 1174-1320 (PDADHTWYTD…ADQAAREVAT (147 aa)). The HHCC-type zinc-finger motif lies at 1387–1427 (HQLTHLSFSKTKALLERSYSPYYMLNRDRTLKDITETCKAC). An Integrase catalytic domain is found at 1444–1602 (RGHRPGTHWE…TPYEILYGAP (159 aa)). Positions 1455 and 1514 each coordinate Mg(2+).

This sequence belongs to the retroviral Pol polyprotein family. Homohexamer; further associates as homomultimer. The virus core is composed of a lattice formed from hexagonal rings, each containing six capsid monomers. Interacts with mouse UBE2I and mouse PIAS4. As to quaternary structure, interacts (via PPXY motif) with host NEDD4. Interacts (via PSAP motif) with host TSG101. Interacts (via LYPX(n)L motif) with host PDCD6IP. In terms of assembly, the reverse transcriptase is a monomer (Potential). Interacts (via RNase domains) with host release factor ETF1; this interaction is essential for translational readthrough of amber codon between viral gag and pol genes, as well as for viral replication. Homodimer. Requires Mg(2+) as cofactor. In terms of processing, ubiquitinated by ITCH. Gag can recruit the ubiquitin ligase Itch in an L domain-independent manner to facilitate virus release via a mechanism that involves Gag ubiquitination. Post-translationally, specific enzymatic cleavages by the viral protease yield mature proteins. The protease is released by autocatalytic cleavage. The polyprotein is cleaved during and after budding, this process is termed maturation. Sumoylated; which is required for virus replication. In terms of processing, phosphorylated on serine residues.

Its subcellular location is the virion. It localises to the host cell membrane. The protein resides in the host late endosome membrane. The protein localises to the host endosome. It is found in the host multivesicular body. Its subcellular location is the host cytoplasm. The enzyme catalyses DNA(n) + a 2'-deoxyribonucleoside 5'-triphosphate = DNA(n+1) + diphosphate. It catalyses the reaction Endonucleolytic cleavage to 5'-phosphomonoester.. Most efficiently inhibited by Amprenavir, which is able to block Gag-Pol processing in infected cells. Plays a role in budding and is processed by the viral protease during virion maturation outside the cell. During budding, it recruits, in a PPXY-dependent or independent manner, Nedd4-like ubiquitin ligases that conjugate ubiquitin molecules to Gag-Pol, or to Gag-Pol binding host factors. Interaction with HECT ubiquitin ligases probably links the viral protein to the host ESCRT pathway and facilitates release. Functionally, targets Gag and gag-pol polyproteins to the plasma membrane via a multipartite membrane binding signal, that includes its myristoylated N-terminus. Also mediates nuclear localization of the pre-integration complex. In terms of biological role, constituent of the pre-integration complex (PIC) which tethers the latter to mitotic chromosomes. This allows the integration of the viral genome into the host DNA. Its function is as follows. Forms the spherical core of the virion that encapsulates the genomic RNA-nucleocapsid complex. Involved in the packaging and encapsidation of two copies of the genome. Binds with high affinity to conserved UCUG elements within the packaging signal, located near the 5'-end of the genome. This binding is dependent on genome dimerization. Acts as a nucleic acid chaperone which is involved in rearrangement of nucleic acid secondary structures during gRNA retrotranscription. Functionally, the aspartyl protease mediates proteolytic cleavages of Gag and Gag-Pol polyproteins during or shortly after the release of the virion from the plasma membrane. Cleavages take place as an ordered, step-wise cascade to yield mature proteins. This process is called maturation. Displays maximal activity during the budding process just prior to particle release from the cell (Potential). Cleaves the translation initiation factor eIF4G leading to the inhibition of host cap-dependent translation. In terms of biological role, RT is a multifunctional enzyme that converts the viral dimeric RNA genome into dsDNA in the cytoplasm, shortly after virus entry into the cell. This enzyme displays a DNA polymerase activity that can copy either DNA or RNA templates, and a ribonuclease H (RNase H) activity that cleaves the RNA strand of RNA-DNA heteroduplexes in a partially processive 3' to 5' endonucleasic mode. Conversion of viral genomic RNA into dsDNA requires many steps. A tRNA binds to the primer-binding site (PBS) situated at the 5' end of the viral RNA. RT uses the 3' end of the tRNA primer to perform a short round of RNA-dependent minus-strand DNA synthesis. The reading proceeds through the U5 region and ends after the repeated (R) region which is present at both ends of viral RNA. The portion of the RNA-DNA heteroduplex is digested by the RNase H, resulting in a ssDNA product attached to the tRNA primer. This ssDNA/tRNA hybridizes with the identical R region situated at the 3' end of viral RNA. This template exchange, known as minus-strand DNA strong stop transfer, can be either intra- or intermolecular. RT uses the 3' end of this newly synthesized short ssDNA to perform the RNA-dependent minus-strand DNA synthesis of the whole template. RNase H digests the RNA template except for a polypurine tract (PPT) situated at the 5' end of the genome. It is not clear if both polymerase and RNase H activities are simultaneous. RNase H probably can proceed both in a polymerase-dependent (RNA cut into small fragments by the same RT performing DNA synthesis) and a polymerase-independent mode (cleavage of remaining RNA fragments by free RTs). Secondly, RT performs DNA-directed plus-strand DNA synthesis using the PPT that has not been removed by RNase H as primers. PPT and tRNA primers are then removed by RNase H. The 3' and 5' ssDNA PBS regions hybridize to form a circular dsDNA intermediate. Strand displacement synthesis by RT to the PBS and PPT ends produces a blunt ended, linear dsDNA copy of the viral genome that includes long terminal repeats (LTRs) at both ends. Its function is as follows. Catalyzes viral DNA integration into the host chromosome, by performing a series of DNA cutting and joining reactions. This enzyme activity takes place after virion entry into a cell and reverse transcription of the RNA genome in dsDNA. The first step in the integration process is 3' processing. This step requires a complex comprising the viral genome, matrix protein and integrase. This complex is called the pre-integration complex (PIC). The integrase protein removes 2 nucleotides from each 3' end of the viral DNA, leaving recessed CA OH's at the 3' ends. In the second step that requires cell division, the PIC enters cell nucleus. In the third step, termed strand transfer, the integrase protein joins the previously processed 3' ends to the 5' ends of strands of target cellular DNA at the site of integration. The last step is viral DNA integration into host chromosome. The sequence is that of Gag-Pol polyprotein (pol) from Friend murine leukemia virus (isolate PVC-211) (FrMLV).